The sequence spans 423 residues: Glutamyl-tRNA(Gln) amidotransferase subunit A (423 aa).

Active-site charge relay system residues include Lys28 and Ser103. Ser127 acts as the Acyl-ester intermediate in catalysis.

Belongs to the amidase family. GatA subfamily. As to quaternary structure, heterotrimer of A, B and C subunits.

It carries out the reaction L-glutamyl-tRNA(Gln) + L-glutamine + ATP + H2O = L-glutaminyl-tRNA(Gln) + L-glutamate + ADP + phosphate + H(+). Its function is as follows. Allows the formation of correctly charged Gln-tRNA(Gln) through the transamidation of misacylated Glu-tRNA(Gln) in organisms which lack glutaminyl-tRNA synthetase. The reaction takes place in the presence of glutamine and ATP through an activated gamma-phospho-Glu-tRNA(Gln). In Halobacterium salinarum (strain ATCC 700922 / JCM 11081 / NRC-1) (Halobacterium halobium), this protein is Glutamyl-tRNA(Gln) amidotransferase subunit A.